Reading from the N-terminus, the 225-residue chain is Phosphatidylserine decarboxylase proenzyme (225 aa).

The active-site Schiff-base intermediate with substrate; via pyruvic acid is Ser-195. Position 195 is a pyruvic acid (Ser); by autocatalysis (Ser-195).

The protein belongs to the phosphatidylserine decarboxylase family. PSD-A subfamily. Heterodimer of a large membrane-associated beta subunit and a small pyruvoyl-containing alpha subunit. The cofactor is pyruvate. Is synthesized initially as an inactive proenzyme. Formation of the active enzyme involves a self-maturation process in which the active site pyruvoyl group is generated from an internal serine residue via an autocatalytic post-translational modification. Two non-identical subunits are generated from the proenzyme in this reaction, and the pyruvate is formed at the N-terminus of the alpha chain, which is derived from the carboxyl end of the proenzyme. The post-translation cleavage follows an unusual pathway, termed non-hydrolytic serinolysis, in which the side chain hydroxyl group of the serine supplies its oxygen atom to form the C-terminus of the beta chain, while the remainder of the serine residue undergoes an oxidative deamination to produce ammonia and the pyruvoyl prosthetic group on the alpha chain.

Its subcellular location is the cell membrane. It carries out the reaction a 1,2-diacyl-sn-glycero-3-phospho-L-serine + H(+) = a 1,2-diacyl-sn-glycero-3-phosphoethanolamine + CO2. Its pathway is phospholipid metabolism; phosphatidylethanolamine biosynthesis; phosphatidylethanolamine from CDP-diacylglycerol: step 2/2. Its function is as follows. Catalyzes the formation of phosphatidylethanolamine (PtdEtn) from phosphatidylserine (PtdSer). The polypeptide is Phosphatidylserine decarboxylase proenzyme (Gluconacetobacter diazotrophicus (strain ATCC 49037 / DSM 5601 / CCUG 37298 / CIP 103539 / LMG 7603 / PAl5)).